The sequence spans 426 residues: Histidine--tRNA ligase (426 aa).

The protein belongs to the class-II aminoacyl-tRNA synthetase family. In terms of assembly, homodimer.

Its subcellular location is the cytoplasm. It carries out the reaction tRNA(His) + L-histidine + ATP = L-histidyl-tRNA(His) + AMP + diphosphate + H(+). This Geobacillus thermodenitrificans (strain NG80-2) protein is Histidine--tRNA ligase.